The primary structure comprises 418 residues: Tryptophan synthase beta chain (418 aa).

Positions 1-18 (MTSTLPNASTPDPASLQP) are enriched in polar residues. The interval 1–23 (MTSTLPNASTPDPASLQPSVRPG) is disordered. Residue Lys-111 is modified to N6-(pyridoxal phosphate)lysine.

The protein belongs to the TrpB family. As to quaternary structure, tetramer of two alpha and two beta chains. It depends on pyridoxal 5'-phosphate as a cofactor.

The enzyme catalyses (1S,2R)-1-C-(indol-3-yl)glycerol 3-phosphate + L-serine = D-glyceraldehyde 3-phosphate + L-tryptophan + H2O. It participates in amino-acid biosynthesis; L-tryptophan biosynthesis; L-tryptophan from chorismate: step 5/5. The beta subunit is responsible for the synthesis of L-tryptophan from indole and L-serine. The sequence is that of Tryptophan synthase beta chain from Parasynechococcus marenigrum (strain WH8102).